Consider the following 640-residue polypeptide: Cytochrome P450 monooxygenase cyp1 (640 aa).

Asn71 carries N-linked (GlcNAc...) asparagine glycosylation. A helical transmembrane segment spans residues 120–139 (LLVFLVGLFLGTIYLLYRYW). N-linked (GlcNAc...) asparagine glycosylation is present at Asn350. A heme-binding site is contributed by Cys572.

This sequence belongs to the cytochrome P450 family. Heme serves as cofactor.

The protein resides in the membrane. It functions in the pathway secondary metabolite biosynthesis. Its function is as follows. Cytochrome P450 monooxygenase; part of the gene cluster that mediates the biosynthesis of the glycolipid biosurfactant ustilagic acid (UA). UA is a secreted cellobiose glycolipid that is toxic for many microorganisms and confers biocontrol activity to U.maydis. UA consists of 15,16-dihydroxypalmitic or 2,15,16-trihydroxypalmitic acid, which is O-glycosidically linked to cellobiose at its terminal hydroxyl group. In addition, the cellobiose moiety is acetylated and acylated with a short-chain hydroxy fatty acid. UA biosynthesis starts with omega-hydroxylation of palmitic acid catalyzed by the cytochrome P450 monooxygenase cyp1. Terminal hydroxylation of palmitic acid precedes subterminal hydroxylation catalyzed by the cytochrome P450 monooxygenase cyp2. Sequential glucosylation of the hydroxy fatty acid is probably catalyzed by the glycosyltransferase ugt1. The cellobiose lipid is further decorated by acetylation of the proximal glucose residue and by acylation with a short-chain beta-hydroxy fatty acid at the distal glucose residue. The acyltransferase uat1 may be a good candidate for catalyzing either acetylation or acylation of the cellobiose lipid. The fatty acid synthase fas2 may be involved in synthesis of the carbon backbone of the short-chain beta-hydroxy fatty acid esterified to the cellobiose disaccharide. The secreted UA consists of a mixture of both alpha-hydroxylated and non-hydroxylated glycolipids; therefore, alpha-hydroxylation of the long-chain fatty, catalyzed by the fatty acid hydroxylase ahd1, occurs late in UA biosynthesis and may be the last step before secretion. This is Cytochrome P450 monooxygenase cyp1 from Mycosarcoma maydis (Corn smut fungus).